Here is a 481-residue protein sequence, read N- to C-terminus: Trigger factor (481 aa).

The PPIase FKBP-type domain occupies 161-298 (GDQLTATVQT…VSEIQNRQLP (138 aa)). The disordered stretch occupies residues 173-245 (DGVPLHKLDE…PTTLIMEERR (73 aa)). Over residues 182 to 235 (EEDDDDDDDDDDDDDDDDDDDDDDDDDDDDDDDDDDDDDDDDDDDDDDDDDEGE) the composition is skewed to acidic residues.

The protein belongs to the FKBP-type PPIase family. Tig subfamily.

The protein resides in the cytoplasm. It catalyses the reaction [protein]-peptidylproline (omega=180) = [protein]-peptidylproline (omega=0). In terms of biological role, involved in protein export. Acts as a chaperone by maintaining the newly synthesized protein in an open conformation. Functions as a peptidyl-prolyl cis-trans isomerase. This Herpetosiphon aurantiacus (strain ATCC 23779 / DSM 785 / 114-95) protein is Trigger factor.